The chain runs to 389 residues: S-adenosylmethionine synthase (389 aa).

Position 15 (His15) interacts with ATP. Asp17 serves as a coordination point for Mg(2+). K(+) is bound at residue Glu43. Positions 56 and 99 each coordinate L-methionine. The segment at 99–109 (QSPDIAQGVNE) is flexible loop. Residues 166 to 168 (DAK), 234 to 235 (RF), Asp243, 249 to 250 (RK), Ala266, and Lys270 contribute to the ATP site. Asp243 is a binding site for L-methionine. Lys274 provides a ligand contact to L-methionine.

The protein belongs to the AdoMet synthase family. As to quaternary structure, homotetramer; dimer of dimers. Mg(2+) serves as cofactor. Requires K(+) as cofactor.

It is found in the cytoplasm. It catalyses the reaction L-methionine + ATP + H2O = S-adenosyl-L-methionine + phosphate + diphosphate. It participates in amino-acid biosynthesis; S-adenosyl-L-methionine biosynthesis; S-adenosyl-L-methionine from L-methionine: step 1/1. Functionally, catalyzes the formation of S-adenosylmethionine (AdoMet) from methionine and ATP. The overall synthetic reaction is composed of two sequential steps, AdoMet formation and the subsequent tripolyphosphate hydrolysis which occurs prior to release of AdoMet from the enzyme. The chain is S-adenosylmethionine synthase from Neisseria gonorrhoeae (strain NCCP11945).